We begin with the raw amino-acid sequence, 489 residues long: Probable cytosol aminopeptidase (489 aa).

Mn(2+) contacts are provided by Lys260 and Asp265. Lys272 is an active-site residue. Mn(2+) contacts are provided by Asp283, Asp342, and Glu344. Arg346 is an active-site residue.

It belongs to the peptidase M17 family. Mn(2+) is required as a cofactor.

The protein resides in the cytoplasm. It carries out the reaction Release of an N-terminal amino acid, Xaa-|-Yaa-, in which Xaa is preferably Leu, but may be other amino acids including Pro although not Arg or Lys, and Yaa may be Pro. Amino acid amides and methyl esters are also readily hydrolyzed, but rates on arylamides are exceedingly low.. The catalysed reaction is Release of an N-terminal amino acid, preferentially leucine, but not glutamic or aspartic acids.. Functionally, presumably involved in the processing and regular turnover of intracellular proteins. Catalyzes the removal of unsubstituted N-terminal amino acids from various peptides. In Alcanivorax borkumensis (strain ATCC 700651 / DSM 11573 / NCIMB 13689 / SK2), this protein is Probable cytosol aminopeptidase.